The following is a 320-amino-acid chain: Putative HTH-type transcriptional regulatory protein VNG_2112C (320 aa).

The HTH cro/C1-type domain occupies 132 to 189; that stretch reads LADRREDERLSLGQLASELGVSRRTVSKYEDGMNASIEVAMRLEDLFGGELTAPVDVM. Positions 143–162 form a DNA-binding region, H-T-H motif; it reads LGQLASELGVSRRTVSKYED.

In Halobacterium salinarum (strain ATCC 700922 / JCM 11081 / NRC-1) (Halobacterium halobium), this protein is Putative HTH-type transcriptional regulatory protein VNG_2112C.